Here is a 226-residue protein sequence, read N- to C-terminus: Octanoyltransferase (226 aa).

In terms of domain architecture, BPL/LPL catalytic spans 34–212 (LAAPDVLLTL…AFSRVFGLEF (179 aa)). Substrate-binding positions include 76 to 83 (RGGDVTYH), 143 to 145 (AIG), and 156 to 158 (GIA). C174 functions as the Acyl-thioester intermediate in the catalytic mechanism.

It belongs to the LipB family.

It localises to the cytoplasm. It carries out the reaction octanoyl-[ACP] + L-lysyl-[protein] = N(6)-octanoyl-L-lysyl-[protein] + holo-[ACP] + H(+). Its pathway is protein modification; protein lipoylation via endogenous pathway; protein N(6)-(lipoyl)lysine from octanoyl-[acyl-carrier-protein]: step 1/2. Its function is as follows. Catalyzes the transfer of endogenously produced octanoic acid from octanoyl-acyl-carrier-protein onto the lipoyl domains of lipoate-dependent enzymes. Lipoyl-ACP can also act as a substrate although octanoyl-ACP is likely to be the physiological substrate. This chain is Octanoyltransferase, found in Thermosynechococcus vestitus (strain NIES-2133 / IAM M-273 / BP-1).